The chain runs to 131 residues: uncharacterized protein (131 aa).

The Response regulatory domain maps to 8–124 (DILVVDDDPD…ELIRLVQQYC (117 aa)). At Asp57 the chain carries 4-aspartylphosphate.

This is an uncharacterized protein from Leptolyngbya boryana (Plectonema boryanum).